A 508-amino-acid chain; its full sequence is GATA zinc finger domain-containing protein 13 (508 aa).

Disordered regions lie at residues 20–51 (YSKNNNNNNNNNNNNNINNNNNNNNNNNINNN) and 203–296 (MSII…PEIE). A compositionally biased stretch (low complexity) spans 23 to 51 (NNNNNNNNNNNNNINNNNNNNNNNNINNN). Polar residues predominate over residues 203 to 224 (MSIIPSDNFPTPQLPLETNTDL). Over residues 225–247 (NNTSDCSSTTFSSPPSSAFNSPN) the composition is skewed to low complexity. Residues 248 to 266 (LQNDYTQPQNQKSQSSTIV) are compositionally biased toward polar residues. The span at 269 to 279 (NSSKSKSKNNK) shows a compositional bias: basic residues. A GATA-type zinc finger spans residues 327-354 (CSICKIKCSIYWRRILINEVRTSVCNAC). Residues 356 to 433 (LRTMKKTKKE…NNNNNNNNNN (78 aa)) adopt a coiled-coil conformation. The segment covering 399 to 482 (TTTTTTTTTS…NNNNNDNYND (84 aa)) has biased composition (low complexity). The tract at residues 399–484 (TTTTTTTTTS…NNNDNYNDSI (86 aa)) is disordered.

In Dictyostelium discoideum (Social amoeba), this protein is GATA zinc finger domain-containing protein 13 (gtaM).